Here is a 102-residue protein sequence, read N- to C-terminus: Large ribosomal subunit protein bL21 (102 aa).

This sequence belongs to the bacterial ribosomal protein bL21 family. In terms of assembly, part of the 50S ribosomal subunit. Contacts protein L20.

Functionally, this protein binds to 23S rRNA in the presence of protein L20. This Pelobacter propionicus (strain DSM 2379 / NBRC 103807 / OttBd1) protein is Large ribosomal subunit protein bL21.